The chain runs to 263 residues: Type-2Bb cytolytic delta-endotoxin (263 aa).

This sequence belongs to the cyt1/cyt2 endotoxin family. Post-translationally, active after proteolytic processing.

Functionally, kills the larvae of dipteran insects by making pores in the epithelial cell membrane of the insect midgut. The protein is Type-2Bb cytolytic delta-endotoxin (cyt2Bb1) of Bacillus thuringiensis subsp. jegathesan.